A 115-amino-acid chain; its full sequence is Phosphorelay protein LuxU (115 aa).

Residues 17-107 (GADNVPVLLE…DRLHQTQQAY (91 aa)) enclose the HPt domain. Phosphohistidine is present on histidine 56.

In terms of assembly, monomer.

Its function is as follows. Phosphorelay protein which receives a sensory signal from a sensor kinase and transmit it to LuxO. At low cell density, a phosphoryl group is transferred from the sensor kinase, probably on His-56 and this phosphoryl group is further transferred to LuxO. The sequence is that of Phosphorelay protein LuxU (luxU) from Vibrio vulnificus (strain CMCP6).